Consider the following 272-residue polypeptide: Large ribosomal subunit protein uL4 (272 aa).

It belongs to the universal ribosomal protein uL4 family. Part of the 50S ribosomal subunit.

One of the primary rRNA binding proteins, this protein initially binds near the 5'-end of the 23S rRNA. It is important during the early stages of 50S assembly. It makes multiple contacts with different domains of the 23S rRNA in the assembled 50S subunit and ribosome. Its function is as follows. Forms part of the polypeptide exit tunnel. The sequence is that of Large ribosomal subunit protein uL4 from Aeropyrum pernix (strain ATCC 700893 / DSM 11879 / JCM 9820 / NBRC 100138 / K1).